The following is a 379-amino-acid chain: MPASKRDYYEVLGVDKKASNDDIKKAYRKLAIKYHPDKNQGDKAAEEKFKEATEAYEILIDEKKRSMYDQFGHAGVDGMSGGGGYDPSAFQGFEDIFGGSFSDIFENLFGGGFSSRSSGFGGRHAGPVRGSNLRYDLQISFVDAVYGKKAELSYTRNEKCSECHGTGSESGSSKRMCPDCKGTGQVRQSTGFFSISRPCPTCGGEGSIIEKPCKKCGGNGLERKKQRIIVTIPAGVENGKRITIPSQGNAGQAGGDYGDLFVFIFVQAHPYFERNGIDLYCAVPISMTQAALGGEINIKSLDEKTLRLKIPAGTQNGKLLRIRGEGVPTGIGRKGDLYIQIQVQIPSKLSSNSKKLLQEISAIEGENENPNLIPLKDLP.

The J domain occupies 7–72 (DYYEVLGVDK…KKRSMYDQFG (66 aa)). The CR-type zinc-finger motif lies at 147–225 (GKKAELSYTR…CGGNGLERKK (79 aa)). The Zn(2+) site is built by Cys-160, Cys-163, Cys-177, Cys-180, Cys-199, Cys-202, Cys-213, and Cys-216. CXXCXGXG motif repeat units follow at residues 160–167 (CSECHGTG), 177–184 (CPDCKGTG), 199–206 (CPTCGGEG), and 213–220 (CKKCGGNG).

Belongs to the DnaJ family. Homodimer. Zn(2+) serves as cofactor.

Its subcellular location is the cytoplasm. Participates actively in the response to hyperosmotic and heat shock by preventing the aggregation of stress-denatured proteins and by disaggregating proteins, also in an autonomous, DnaK-independent fashion. Unfolded proteins bind initially to DnaJ; upon interaction with the DnaJ-bound protein, DnaK hydrolyzes its bound ATP, resulting in the formation of a stable complex. GrpE releases ADP from DnaK; ATP binding to DnaK triggers the release of the substrate protein, thus completing the reaction cycle. Several rounds of ATP-dependent interactions between DnaJ, DnaK and GrpE are required for fully efficient folding. Also involved, together with DnaK and GrpE, in the DNA replication of plasmids through activation of initiation proteins. This Treponema denticola (strain ATCC 35405 / DSM 14222 / CIP 103919 / JCM 8153 / KCTC 15104) protein is Chaperone protein DnaJ.